We begin with the raw amino-acid sequence, 573 residues long: Dihydroxy-acid dehydratase (573 aa).

Over residues 1–14 the composition is skewed to basic and acidic residues; that stretch reads MTEKSPKPHKRSDA. Positions 1–21 are disordered; the sequence is MTEKSPKPHKRSDAITEGPNR. Cys55 is a binding site for [2Fe-2S] cluster. Position 87 (Asp87) interacts with Mg(2+). Position 128 (Cys128) interacts with [2Fe-2S] cluster. Asp129 and Lys130 together coordinate Mg(2+). Lys130 is modified (N6-carboxylysine). Residue Cys200 participates in [2Fe-2S] cluster binding. Position 450 (Glu450) interacts with Mg(2+). Ser476 (proton acceptor) is an active-site residue.

The protein belongs to the IlvD/Edd family. In terms of assembly, homodimer. The cofactor is [2Fe-2S] cluster. Mg(2+) is required as a cofactor.

It catalyses the reaction (2R)-2,3-dihydroxy-3-methylbutanoate = 3-methyl-2-oxobutanoate + H2O. The catalysed reaction is (2R,3R)-2,3-dihydroxy-3-methylpentanoate = (S)-3-methyl-2-oxopentanoate + H2O. It functions in the pathway amino-acid biosynthesis; L-isoleucine biosynthesis; L-isoleucine from 2-oxobutanoate: step 3/4. The protein operates within amino-acid biosynthesis; L-valine biosynthesis; L-valine from pyruvate: step 3/4. In terms of biological role, functions in the biosynthesis of branched-chain amino acids. Catalyzes the dehydration of (2R,3R)-2,3-dihydroxy-3-methylpentanoate (2,3-dihydroxy-3-methylvalerate) into 2-oxo-3-methylpentanoate (2-oxo-3-methylvalerate) and of (2R)-2,3-dihydroxy-3-methylbutanoate (2,3-dihydroxyisovalerate) into 2-oxo-3-methylbutanoate (2-oxoisovalerate), the penultimate precursor to L-isoleucine and L-valine, respectively. The chain is Dihydroxy-acid dehydratase from Koribacter versatilis (strain Ellin345).